Consider the following 194-residue polypeptide: Large ribosomal subunit protein bL25 (194 aa).

It belongs to the bacterial ribosomal protein bL25 family. CTC subfamily. In terms of assembly, part of the 50S ribosomal subunit; part of the 5S rRNA/L5/L18/L25 subcomplex. Contacts the 5S rRNA. Binds to the 5S rRNA independently of L5 and L18.

In terms of biological role, this is one of the proteins that binds to the 5S RNA in the ribosome where it forms part of the central protuberance. The polypeptide is Large ribosomal subunit protein bL25 (Geobacter sulfurreducens (strain ATCC 51573 / DSM 12127 / PCA)).